A 34-amino-acid polypeptide reads, in one-letter code: Unknown protein 5 (34 aa).

The chain is Unknown protein 5 from Pseudotsuga menziesii (Douglas-fir).